Here is a 394-residue protein sequence, read N- to C-terminus: Argininosuccinate synthase (394 aa).

ATP-binding positions include 7–15 (AYSGGLDTS) and Ala34. The L-citrulline site is built by Tyr85 and Ser90. Gly115 is an ATP binding site. Residues Thr117, Asn121, and Asp122 each coordinate L-aspartate. Residue Asn121 participates in L-citrulline binding. Arg125, Ser176, Ser185, Glu261, and Tyr273 together coordinate L-citrulline.

Belongs to the argininosuccinate synthase family. Type 1 subfamily. In terms of assembly, homotetramer.

The protein localises to the cytoplasm. The catalysed reaction is L-citrulline + L-aspartate + ATP = 2-(N(omega)-L-arginino)succinate + AMP + diphosphate + H(+). It participates in amino-acid biosynthesis; L-arginine biosynthesis; L-arginine from L-ornithine and carbamoyl phosphate: step 2/3. This is Argininosuccinate synthase from Ehrlichia ruminantium (strain Gardel).